An 850-amino-acid polypeptide reads, in one-letter code: Bifunctional uridylyltransferase/uridylyl-removing enzyme (850 aa).

Positions M1–P317 are uridylyltransferase. Positions I318–I673 are uridylyl-removing. The HD domain maps to V436 to L558. ACT domains are found at residues Q674–P755 and V783–G850.

This sequence belongs to the GlnD family. Mg(2+) serves as cofactor.

It catalyses the reaction [protein-PII]-L-tyrosine + UTP = [protein-PII]-uridylyl-L-tyrosine + diphosphate. The catalysed reaction is [protein-PII]-uridylyl-L-tyrosine + H2O = [protein-PII]-L-tyrosine + UMP + H(+). With respect to regulation, uridylyltransferase (UTase) activity is inhibited by glutamine, while glutamine activates uridylyl-removing (UR) activity. Functionally, modifies, by uridylylation and deuridylylation, the PII regulatory proteins (GlnB and homologs), in response to the nitrogen status of the cell that GlnD senses through the glutamine level. Under low glutamine levels, catalyzes the conversion of the PII proteins and UTP to PII-UMP and PPi, while under higher glutamine levels, GlnD hydrolyzes PII-UMP to PII and UMP (deuridylylation). Thus, controls uridylylation state and activity of the PII proteins, and plays an important role in the regulation of nitrogen assimilation and metabolism. This Thiobacillus denitrificans (strain ATCC 25259 / T1) protein is Bifunctional uridylyltransferase/uridylyl-removing enzyme.